The primary structure comprises 156 residues: Small ribosomal subunit protein uS7 (156 aa).

Belongs to the universal ribosomal protein uS7 family. In terms of assembly, part of the 30S ribosomal subunit. Contacts proteins S9 and S11.

Its function is as follows. One of the primary rRNA binding proteins, it binds directly to 16S rRNA where it nucleates assembly of the head domain of the 30S subunit. Is located at the subunit interface close to the decoding center, probably blocks exit of the E-site tRNA. In Nocardioides sp. (strain ATCC BAA-499 / JS614), this protein is Small ribosomal subunit protein uS7.